Here is a 242-residue protein sequence, read N- to C-terminus: Sugar fermentation stimulation protein homolog (242 aa).

The protein belongs to the SfsA family.

This chain is Sugar fermentation stimulation protein homolog, found in Methanosphaera stadtmanae (strain ATCC 43021 / DSM 3091 / JCM 11832 / MCB-3).